A 195-amino-acid chain; its full sequence is dTTP/UTP pyrophosphatase (195 aa).

The active-site Proton acceptor is the D70.

It belongs to the Maf family. YhdE subfamily. It depends on a divalent metal cation as a cofactor.

The protein localises to the cytoplasm. It catalyses the reaction dTTP + H2O = dTMP + diphosphate + H(+). The catalysed reaction is UTP + H2O = UMP + diphosphate + H(+). Nucleoside triphosphate pyrophosphatase that hydrolyzes dTTP and UTP. May have a dual role in cell division arrest and in preventing the incorporation of modified nucleotides into cellular nucleic acids. The protein is dTTP/UTP pyrophosphatase of Methanococcoides burtonii (strain DSM 6242 / NBRC 107633 / OCM 468 / ACE-M).